Here is a 350-residue protein sequence, read N- to C-terminus: Renin receptor (350 aa).

The first 17 residues, 1 to 17 (MAVLVVLLFFLVAGALG), serve as a signal peptide directing secretion. Residues 18–302 (NEFSILRSPG…YNLAYKYNLE (285 aa)) lie on the Extracellular side of the membrane. Residues 303–323 (YSVVFNLVLWIMIGLALAVII) traverse the membrane as a helical segment. The Cytoplasmic portion of the chain corresponds to 324-350 (TSYNIWNMDPGYDSIIYRMTNQKIRID). The short motif at 346-350 (KIRID) is the Mediates retrograde transport to the ER element.

In terms of assembly, interacts with renin. Accessory component of the multisubunit proton-transporting vacuolar (V)-ATPase protein pump. Interacts (via N-terminus) with ATP6AP1 (via N-terminus). Interacts with ATP6V0D1; ATP6V0D1 is a V-ATPase complex subunit and the interaction promotes V-ATPase complex assembly. Interacts with TMEM9; TMEM9 is a V-ATPase assembly regulator and the interaction induces the interaction with ATP6V0D1. Interacts with VMA21 (via N-terminus); VMA21 is a V-ATPase accessory component. In terms of processing, phosphorylated. Post-translationally, proteolytically cleaved by a furin-like convertase in the trans-Golgi network to generate N- and C-terminal fragments. Expressed in glutamatergic and GABAergic neurons with highest levels in the cortex, the hippocampus, the medial habenular nucleus, the cerebellum, the medulla and the olfactory bulb (at protein level).

Its subcellular location is the endoplasmic reticulum membrane. The protein localises to the lysosome membrane. It is found in the cytoplasmic vesicle. It localises to the autophagosome membrane. The protein resides in the cell projection. Its subcellular location is the dendritic spine membrane. The protein localises to the axon. It is found in the endosome membrane. It localises to the clathrin-coated vesicle membrane. The protein resides in the secretory vesicle. Its subcellular location is the synaptic vesicle membrane. Multifunctional protein which functions as a renin, prorenin cellular receptor and is involved in the assembly of the lysosomal proton-transporting V-type ATPase (V-ATPase) and the acidification of the endo-lysosomal system. May mediate renin-dependent cellular responses by activating ERK1 and ERK2. By increasing the catalytic efficiency of renin in AGT/angiotensinogen conversion to angiotensin I, may also play a role in the renin-angiotensin system (RAS). Through its function in V-type ATPase (v-ATPase) assembly and acidification of the lysosome it regulates protein degradation and may control different signaling pathways important for proper brain development, synapse morphology and synaptic transmission. In Mus musculus (Mouse), this protein is Renin receptor.